The primary structure comprises 93 residues: MKIGVLFTIISMLCLLEVRKICSKKEGGYPRYFSFGYKCQNWGTNEYCRTVCQLHKGEYGYCYAGDCYCEGLTEENRLFWNVYRKYCKNPLFD.

Positions methionine 1–serine 23 are cleaved as a signal peptide. 4 disulfide bridges follow: cysteine 22/cysteine 87, cysteine 39/cysteine 62, cysteine 48/cysteine 67, and cysteine 52/cysteine 69. In terms of domain architecture, LCN-type CS-alpha/beta spans glutamate 26 to lysine 88.

Belongs to the long (4 C-C) scorpion toxin superfamily. Expressed by the venom gland.

It localises to the secreted. Functionally, the edited BmKBTx-like may modulate voltage-gated sodium channels (Nav). In terms of biological role, the non-edited form is able to form a heterodimer. In orthologs, a heterodimer with LVP beta-chain induces lipolysis in rat adipocytes, which is mediated through the beta-2 adrenergic receptor pathway (ADRB2). Since no LVP beta-chains have been identified in the venom of this scorpion, it is possible that this protein is not involved in a lipolysis process. This is Putative sodium channel toxin Ts41 from Tityus serrulatus (Brazilian scorpion).